Here is a 157-residue protein sequence, read N- to C-terminus: Small ribosomal subunit protein uS7 (157 aa).

It belongs to the universal ribosomal protein uS7 family. As to quaternary structure, part of the 30S ribosomal subunit. Contacts proteins S9 and S11.

Functionally, one of the primary rRNA binding proteins, it binds directly to 16S rRNA where it nucleates assembly of the head domain of the 30S subunit. Is located at the subunit interface close to the decoding center, probably blocks exit of the E-site tRNA. The sequence is that of Small ribosomal subunit protein uS7 from Bdellovibrio bacteriovorus (strain ATCC 15356 / DSM 50701 / NCIMB 9529 / HD100).